The primary structure comprises 469 residues: 6-phosphogluconate dehydrogenase, NADP(+)-dependent, decarboxylating (469 aa).

NADP(+)-binding positions include 10-15 (GLAVMG), 33-35 (NRS), 74-76 (VKA), and N102. Residues N102 and 128–130 (SGG) each bind substrate. K182 acts as the Proton acceptor in catalysis. Residue 185–186 (HN) participates in substrate binding. Catalysis depends on E189, which acts as the Proton donor. Substrate is bound by residues Y190, K260, R287, R446, and H452.

Belongs to the 6-phosphogluconate dehydrogenase family. Homodimer.

The enzyme catalyses 6-phospho-D-gluconate + NADP(+) = D-ribulose 5-phosphate + CO2 + NADPH. The protein operates within carbohydrate degradation; pentose phosphate pathway; D-ribulose 5-phosphate from D-glucose 6-phosphate (oxidative stage): step 3/3. In terms of biological role, catalyzes the oxidative decarboxylation of 6-phosphogluconate to ribulose 5-phosphate and CO(2), with concomitant reduction of NADP to NADPH. Is the predominant 6-P-gluconate dehydrogenase isoenzyme in B.subtilis during growth on glucose and gluconate. In Bacillus subtilis (strain 168), this protein is 6-phosphogluconate dehydrogenase, NADP(+)-dependent, decarboxylating (gndA).